The chain runs to 158 residues: Arginine repressor (158 aa).

It belongs to the ArgR family.

It localises to the cytoplasm. It participates in amino-acid biosynthesis; L-arginine biosynthesis [regulation]. Functionally, regulates arginine biosynthesis genes. The protein is Arginine repressor of Anaeromyxobacter sp. (strain Fw109-5).